Consider the following 253-residue polypeptide: Probable transcriptional regulatory protein KRH_13670 (253 aa).

The protein belongs to the TACO1 family.

The protein resides in the cytoplasm. The chain is Probable transcriptional regulatory protein KRH_13670 from Kocuria rhizophila (strain ATCC 9341 / DSM 348 / NBRC 103217 / DC2201).